The sequence spans 480 residues: MYCGRYETIGETRGNSLNVFIGAAAGFVAAVALINSGLATSFYSTPVRAVPQVIVPSSLAASSQLPVVPKETNIQVNSAQILYPDSTVKGQERTITILGVCSFLSASLFYIWKQFGMKARTTKPADLQEVSGGRIWSLASTTGSNIGAGKTVRVATRKSPLAMWQAEFIQSELERLWPGITVELQPMSTRGDKILDSPLAKVGGKGLFVKELETALLENRSDIAVHSTKDVPMELPEGLVLGVICKRHDPCDAIVFPKGSNLKSLEDLPHGARVGTSSLRRQCQLLLKRPDLKFLELRGNVNTRLAKLDSGDYDAIILAAAGLKRLGFSDRVLPGETNIIDPNVMCPAAGQGALSIELRTNDPEIAALLEPLHHIPDAVTVACERAMNRRLNGGCQVPISGFAQLKDGQLRMEARVGSVTGKGPLIIQSKTFRLPWSGRTWPQLQKESEALGVEVADMLLADGAQAYLDEAYASRTLGWA.

Residues 1–139 (MYCGRYETIG…VSGGRIWSLA (139 aa)) constitute a chloroplast transit peptide. C395 is modified (S-(dipyrrolylmethanemethyl)cysteine).

Belongs to the HMBS family. Dipyrromethane serves as cofactor.

It localises to the plastid. Its subcellular location is the chloroplast. It catalyses the reaction 4 porphobilinogen + H2O = hydroxymethylbilane + 4 NH4(+). It functions in the pathway porphyrin-containing compound metabolism; protoporphyrin-IX biosynthesis; coproporphyrinogen-III from 5-aminolevulinate: step 2/4. The protein operates within porphyrin-containing compound metabolism; chlorophyll biosynthesis. In terms of biological role, tetrapolymerization of the monopyrrole PBG into the hydroxymethylbilane pre-uroporphyrinogen in several discrete steps. This is Porphobilinogen deaminase, chloroplastic from Euglena gracilis.